We begin with the raw amino-acid sequence, 506 residues long: Trans-cinnamate 4-monooxygenase C4H1 (506 aa).

2 consecutive short sequence motifs (nuclear localization signal) follow at residues 161-168 (VKKMPESA) and 247-254 (QRRLQLFK). Cysteine 448 contributes to the heme binding site.

The protein belongs to the cytochrome P450 family. Requires heme as cofactor.

The protein resides in the nucleus. It catalyses the reaction (E)-cinnamate + reduced [NADPH--hemoprotein reductase] + O2 = (E)-4-coumarate + oxidized [NADPH--hemoprotein reductase] + H2O + H(+). The protein operates within phenylpropanoid metabolism; trans-4-coumarate biosynthesis; trans-4-coumarate from trans-cinnamate: step 1/1. Component of the floral volatile benzenoid/phenylpropanoid (FVBP) biosynthetic pathway that controls carbon flux to pigments essential for pollination or UV protection, to numerous pytoalexins synthesized by plants when challenged by pathogens, and to lignins. This Petunia hybrida (Petunia) protein is Trans-cinnamate 4-monooxygenase C4H1.